The following is a 396-amino-acid chain: Formate-dependent phosphoribosylglycinamide formyltransferase (396 aa).

N(1)-(5-phospho-beta-D-ribosyl)glycinamide-binding positions include 24–25 (EL) and Glu84. Residues Arg116, Lys157, 162–167 (SSGKGQ), 197–200 (EGFV), and Glu205 each bind ATP. The ATP-grasp domain maps to 121 to 310 (RLAAETLGIK…EFALHVRAIL (190 aa)). 2 residues coordinate Mg(2+): Glu269 and Glu281. Residues Asp288, Lys359, and 366–367 (RR) each bind N(1)-(5-phospho-beta-D-ribosyl)glycinamide.

Belongs to the PurK/PurT family. Homodimer.

The catalysed reaction is N(1)-(5-phospho-beta-D-ribosyl)glycinamide + formate + ATP = N(2)-formyl-N(1)-(5-phospho-beta-D-ribosyl)glycinamide + ADP + phosphate + H(+). The protein operates within purine metabolism; IMP biosynthesis via de novo pathway; N(2)-formyl-N(1)-(5-phospho-D-ribosyl)glycinamide from N(1)-(5-phospho-D-ribosyl)glycinamide (formate route): step 1/1. In terms of biological role, involved in the de novo purine biosynthesis. Catalyzes the transfer of formate to 5-phospho-ribosyl-glycinamide (GAR), producing 5-phospho-ribosyl-N-formylglycinamide (FGAR). Formate is provided by PurU via hydrolysis of 10-formyl-tetrahydrofolate. This is Formate-dependent phosphoribosylglycinamide formyltransferase from Psychromonas ingrahamii (strain DSM 17664 / CCUG 51855 / 37).